A 202-amino-acid chain; its full sequence is Small ribosomal subunit protein uS4c (202 aa).

The S4 RNA-binding domain maps to 90 to 151 (MRLDNTIFRL…KQKSRFIITK (62 aa)).

The protein belongs to the universal ribosomal protein uS4 family. Part of the 30S ribosomal subunit. Contacts protein S5. The interaction surface between S4 and S5 is involved in control of translational fidelity.

The protein resides in the plastid. It is found in the chloroplast. In terms of biological role, one of the primary rRNA binding proteins, it binds directly to 16S rRNA where it nucleates assembly of the body of the 30S subunit. Functionally, with S5 and S12 plays an important role in translational accuracy. This is Small ribosomal subunit protein uS4c (rps4) from Plagiochila adianthoides (Liverwort).